Consider the following 119-residue polypeptide: Beta-2-microglobulin (119 aa).

The first 20 residues, 1–20, serve as a signal peptide directing secretion; sequence MARFVAVALLVLLSLSGLET. In terms of domain architecture, Ig-like C1-type spans 25–114; it reads PKIQVYSRHP…VTFSTPKTVK (90 aa). A disulfide bond links Cys-45 and Cys-100.

Belongs to the beta-2-microglobulin family. Heterodimer of an alpha chain and a beta chain. Beta-2-microglobulin is the beta-chain of major histocompatibility complex class I molecules.

The protein resides in the secreted. Component of the class I major histocompatibility complex (MHC). Involved in the presentation of peptide antigens to the immune system. This Callicebus personatus personatus (Masked titi) protein is Beta-2-microglobulin (B2M).